Consider the following 178-residue polypeptide: Ribosome maturation factor RimP (178 aa).

It belongs to the RimP family.

It is found in the cytoplasm. Its function is as follows. Required for maturation of 30S ribosomal subunits. The polypeptide is Ribosome maturation factor RimP (Maricaulis maris (strain MCS10) (Caulobacter maris)).